Here is a 416-residue protein sequence, read N- to C-terminus: D-amino acid dehydrogenase (416 aa).

3–17 (VTILGAGVIGVTTAY) serves as a coordination point for FAD.

Belongs to the DadA oxidoreductase family. It depends on FAD as a cofactor.

It carries out the reaction a D-alpha-amino acid + A + H2O = a 2-oxocarboxylate + AH2 + NH4(+). It functions in the pathway amino-acid degradation; D-alanine degradation; NH(3) and pyruvate from D-alanine: step 1/1. In terms of biological role, oxidative deamination of D-amino acids. In Rhizobium rhizogenes (strain K84 / ATCC BAA-868) (Agrobacterium radiobacter), this protein is D-amino acid dehydrogenase.